Reading from the N-terminus, the 291-residue chain is uncharacterized protein (291 aa).

The next 4 membrane-spanning stretches (helical) occupy residues Ile-13 to Ile-33, Ile-84 to Ile-104, Leu-111 to Ile-131, and Leu-219 to Leu-239.

The protein resides in the cell membrane. This is an uncharacterized protein from Ureaplasma parvum serovar 3 (strain ATCC 700970).